We begin with the raw amino-acid sequence, 563 residues long: Ribulokinase (563 aa).

It belongs to the ribulokinase family.

The enzyme catalyses D-ribulose + ATP = D-ribulose 5-phosphate + ADP + H(+). It carries out the reaction L-ribulose + ATP = L-ribulose 5-phosphate + ADP + H(+). It functions in the pathway carbohydrate degradation; L-arabinose degradation via L-ribulose; D-xylulose 5-phosphate from L-arabinose (bacterial route): step 2/3. The chain is Ribulokinase from Mycolicibacterium smegmatis (Mycobacterium smegmatis).